Here is a 133-residue protein sequence, read N- to C-terminus: Putative biopolymer transport protein ExbD-like 1 (133 aa).

The Cytoplasmic portion of the chain corresponds to 1 to 15; sequence MNYDNYWDEDKPELN. Residues 16–32 form a helical membrane-spanning segment; it reads ITPLVDVMLVLLAILMV. Residues 33–133 are Periplasmic-facing; sequence TTPTLTYKEE…FLKVSLITSP (101 aa).

This sequence belongs to the ExbD/TolR family.

The protein resides in the cell inner membrane. In Helicobacter pylori (strain ATCC 700392 / 26695) (Campylobacter pylori), this protein is Putative biopolymer transport protein ExbD-like 1.